Consider the following 681-residue polypeptide: Transcriptional regulator prz1 (681 aa).

A compositionally biased stretch (basic and acidic residues) spans 1–15 (MERQRSEEANRRFKD). Disordered stretches follow at residues 1–29 (MERQ…SKPD), 66–96 (NPSK…DSYP), 340–372 (SHQS…NSPF), 410–433 (PQIN…ANPL), and 520–563 (KIEN…AKSE). Polar residues-rich tracts occupy residues 66–86 (NPSK…FKTS) and 340–358 (SHQS…LNSE). Residues 416–428 (PSSPSKSQSGPSL) are compositionally biased toward low complexity. Positions 528 to 549 (SNDYLSVRNTRPRSRSLNSLVG) are enriched in polar residues. Phosphoserine is present on residues serine 543 and serine 546. Residues 550-559 (NKSENSSSSK) are compositionally biased toward low complexity. C2H2-type zinc fingers lie at residues 570 to 594 (YVCT…MNTH) and 600 to 622 (FQCS…EQLH). A C2H2-type 3; degenerate zinc finger spans residues 628–650 (FACVTCNQRFARMDALNRHYKSE). The segment at 662–681 (RGIQVPPSRKTAVASTSKQK) is disordered.

The protein belongs to the EGR C2H2-type zinc-finger protein family. Phosphorylated. Dephosphorylated by calcineurin which leads to rapid translocation from the cytoplasm to the nucleus.

Its subcellular location is the nucleus. It is found in the cytoplasm. Involved in the regulation of calcium ion homeostasis. Binds to the calcineurin-dependent response element. Transcriptionally regulates pmc1. The sequence is that of Transcriptional regulator prz1 (prz1) from Schizosaccharomyces pombe (strain 972 / ATCC 24843) (Fission yeast).